Here is a 456-residue protein sequence, read N- to C-terminus: Glycine--tRNA ligase (456 aa).

Arg98 and Glu168 together coordinate substrate. ATP contacts are provided by residues 200-202 (RNE), 210-215 (FRTREF), 285-286 (EL), and 329-332 (GVER). 215-219 (FEQME) serves as a coordination point for substrate. 325 to 329 (EPSVG) contacts substrate.

It belongs to the class-II aminoacyl-tRNA synthetase family. As to quaternary structure, homodimer.

The protein resides in the cytoplasm. The catalysed reaction is tRNA(Gly) + glycine + ATP = glycyl-tRNA(Gly) + AMP + diphosphate. In terms of biological role, catalyzes the attachment of glycine to tRNA(Gly). This Mycoplasma mycoides subsp. mycoides SC (strain CCUG 32753 / NCTC 10114 / PG1) protein is Glycine--tRNA ligase.